Reading from the N-terminus, the 274-residue chain is Dermonecrotic toxin LspiSicTox-betaIII1 G (274 aa).

Histidine 5 is an active-site residue. Positions 25 and 27 each coordinate Mg(2+). Histidine 41 acts as the Nucleophile in catalysis. Intrachain disulfides connect cysteine 45-cysteine 51 and cysteine 47-cysteine 189. N-linked (GlcNAc...) asparagine glycosylation is present at asparagine 66. A Mg(2+)-binding site is contributed by aspartate 85.

Belongs to the arthropod phospholipase D family. Class II subfamily. The cofactor is Mg(2+). As to expression, expressed by the venom gland.

It localises to the secreted. The enzyme catalyses an N-(acyl)-sphingosylphosphocholine = an N-(acyl)-sphingosyl-1,3-cyclic phosphate + choline. The catalysed reaction is an N-(acyl)-sphingosylphosphoethanolamine = an N-(acyl)-sphingosyl-1,3-cyclic phosphate + ethanolamine. It catalyses the reaction a 1-acyl-sn-glycero-3-phosphocholine = a 1-acyl-sn-glycero-2,3-cyclic phosphate + choline. It carries out the reaction a 1-acyl-sn-glycero-3-phosphoethanolamine = a 1-acyl-sn-glycero-2,3-cyclic phosphate + ethanolamine. In terms of biological role, dermonecrotic toxins cleave the phosphodiester linkage between the phosphate and headgroup of certain phospholipids (sphingolipid and lysolipid substrates), forming an alcohol (often choline) and a cyclic phosphate. This toxin acts on sphingomyelin (SM). It may also act on ceramide phosphoethanolamine (CPE), lysophosphatidylcholine (LPC) and lysophosphatidylethanolamine (LPE), but not on lysophosphatidylserine (LPS), and lysophosphatidylglycerol (LPG). It acts by transphosphatidylation, releasing exclusively cyclic phosphate products as second products. Induces dermonecrosis, hemolysis, increased vascular permeability, edema, inflammatory response, and platelet aggregation. This Loxosceles spinulosa (Recluse spider) protein is Dermonecrotic toxin LspiSicTox-betaIII1 G.